A 215-amino-acid chain; its full sequence is Lysozyme-like protein 5 (215 aa).

The first 17 residues, 1 to 17 (MKHFFITILLFCSVVSA), serve as a signal peptide directing secretion. The 198-residue stretch at 18–215 (ARNGIDINSP…GVSVDMNYIP (198 aa)) folds into the Ch-type lysozyme domain. Residues D23, D113, and E115 contribute to the active site.

This sequence belongs to the glycosyl hydrolase 25 family.

Its function is as follows. Plays a role in resistance to Gram-positive bacteria S.aureus or B.thuringiensis infection. This is Lysozyme-like protein 5 from Caenorhabditis elegans.